The following is a 76-amino-acid chain: Spore germination protein-like protein YdzR (76 aa).

This sequence belongs to the GerPA/GerPF family.

The sequence is that of Spore germination protein-like protein YdzR (ydzR) from Bacillus subtilis (strain 168).